A 256-amino-acid chain; its full sequence is Non-specific lipid transfer protein GPI-anchored 23 (256 aa).

The signal sequence occupies residues 1 to 21 (MKPSFVLLSIVLLLSSSLSDA). Residue Asn-41 is glycosylated (N-linked (GlcNAc...) asparagine). Intrachain disulfides connect Cys-45/Cys-88, Cys-55/Cys-72, Cys-73/Cys-113, and Cys-86/Cys-121. The segment at 125–230 (TPAASTPVSP…SPSPSPSPSI (106 aa)) is disordered. Positions 138–230 (SPTTSPSSAK…SPSPSPSPSI (93 aa)) are enriched in low complexity. Residue Ser-225 is the site of GPI-anchor amidated serine attachment. Positions 226 to 256 (PSPSISSSGILLVSKLFIAVVMVSSFLYILA) are cleaved as a propeptide — removed in mature form.

This sequence belongs to the plant LTP family. In terms of tissue distribution, confined to the anthers of the inflorescence.

The protein localises to the cell membrane. Its function is as follows. Probable lipid transfer protein. The polypeptide is Non-specific lipid transfer protein GPI-anchored 23 (Arabidopsis thaliana (Mouse-ear cress)).